A 367-amino-acid polypeptide reads, in one-letter code: Probable sugar phosphate/phosphate translocator At1g48230 (367 aa).

Transmembrane regions (helical) follow at residues 9 to 29 (LVLT…VILY), 43 to 63 (LPIT…FLLI), 76 to 96 (FEIY…SLWF), 106 to 126 (VAFI…MAVV), 140 to 160 (MVLV…FNVI), 163 to 183 (VYQV…QVLL), 193 to 213 (VTSL…PWYV), 229 to 249 (WIFF…FLVI), 257 to 276 (IRVA…TVIF), and 280 to 302 (TITG…YNYI). Residues 321-330 (ITKDWKEKNS) show a composition bias toward basic and acidic residues. The interval 321 to 341 (ITKDWKEKNSSDGGSPRGLEL) is disordered.

It belongs to the TPT transporter family. TPT (TC 2.A.7.9) subfamily.

The protein resides in the membrane. This chain is Probable sugar phosphate/phosphate translocator At1g48230, found in Arabidopsis thaliana (Mouse-ear cress).